The primary structure comprises 345 residues: UDP-3-O-acylglucosamine N-acyltransferase (345 aa).

The active-site Proton acceptor is the histidine 248.

Belongs to the transferase hexapeptide repeat family. LpxD subfamily. As to quaternary structure, homotrimer.

The catalysed reaction is a UDP-3-O-[(3R)-3-hydroxyacyl]-alpha-D-glucosamine + a (3R)-hydroxyacyl-[ACP] = a UDP-2-N,3-O-bis[(3R)-3-hydroxyacyl]-alpha-D-glucosamine + holo-[ACP] + H(+). Its pathway is bacterial outer membrane biogenesis; LPS lipid A biosynthesis. In terms of biological role, catalyzes the N-acylation of UDP-3-O-acylglucosamine using 3-hydroxyacyl-ACP as the acyl donor. Is involved in the biosynthesis of lipid A, a phosphorylated glycolipid that anchors the lipopolysaccharide to the outer membrane of the cell. The protein is UDP-3-O-acylglucosamine N-acyltransferase of Prochlorococcus marinus (strain SARG / CCMP1375 / SS120).